Reading from the N-terminus, the 132-residue chain is Mini-ribonuclease 3 (132 aa).

The active site involves Asp-17.

It belongs to the MrnC RNase family. As to quaternary structure, homodimer. The cofactor is Mg(2+).

It localises to the cytoplasm. Involved in correct processing of both the 5' and 3' ends of 23S rRNA precursor. Processes 30S rRNA precursor transcript even in absence of ribonuclease 3 (Rnc); Rnc processes 30S rRNA into smaller rRNA precursors. The polypeptide is Mini-ribonuclease 3 (Enterococcus faecalis (strain ATCC 700802 / V583)).